The following is a 226-amino-acid chain: PKHD-type hydroxylase Bpet2704 (226 aa).

A Fe2OG dioxygenase domain is found at 78–178; sequence KIFPPLFNRY…RISAFFWMQS (101 aa). Fe cation is bound by residues histidine 96, aspartate 98, and histidine 159. Residue arginine 169 participates in 2-oxoglutarate binding.

Requires Fe(2+) as cofactor. The cofactor is L-ascorbate.

The polypeptide is PKHD-type hydroxylase Bpet2704 (Bordetella petrii (strain ATCC BAA-461 / DSM 12804 / CCUG 43448)).